A 205-amino-acid polypeptide reads, in one-letter code: Glutathione peroxidase 1 (205 aa).

Phosphoserine is present on serine 37. Selenocysteine 52 is a catalytic residue. A non-standard amino acid (selenocysteine) is located at residue selenocysteine 52. 2 positions are modified to N6-acetyllysine; alternate: lysine 91 and lysine 117. Residues lysine 91 and lysine 117 each carry the N6-succinyllysine; alternate modification. Residue lysine 117 is glycosylated (N-linked (Glc) (glycation) lysine; in vitro). Lysine 124 is subject to N6-acetyllysine. Lysine 151 bears the N6-acetyllysine; alternate mark. Residue lysine 151 is modified to N6-succinyllysine; alternate. 2 positions are modified to phosphoserine: serine 200 and serine 204.

Belongs to the glutathione peroxidase family. As to quaternary structure, homotetramer. Interacts with MIEN1. During periods of oxidative stress, Sec-52 may react with a superoxide radical, irreversibly lose hydroselenide and be converted to dehydroalanine.

It is found in the cytoplasm. Its subcellular location is the mitochondrion. The enzyme catalyses 2 glutathione + H2O2 = glutathione disulfide + 2 H2O. It carries out the reaction a hydroperoxy polyunsaturated fatty acid + 2 glutathione = a hydroxy polyunsaturated fatty acid + glutathione disulfide + H2O. The catalysed reaction is tert-butyl hydroperoxide + 2 glutathione = tert-butanol + glutathione disulfide + H2O. It catalyses the reaction cumene hydroperoxide + 2 glutathione = 2-phenylpropan-2-ol + glutathione disulfide + H2O. The enzyme catalyses (13S)-hydroperoxy-(9Z,11E)-octadecadienoate + 2 glutathione = (13S)-hydroxy-(9Z,11E)-octadecadienoate + glutathione disulfide + H2O. It carries out the reaction (9S)-hydroperoxy-(10E,12Z)-octadecadienoate + 2 glutathione = (9S)-hydroxy-(10E,12Z)-octadecadienoate + glutathione disulfide + H2O. The catalysed reaction is (5S)-hydroperoxy-(6E,8Z,11Z,14Z)-eicosatetraenoate + 2 glutathione = (5S)-hydroxy-(6E,8Z,11Z,14Z)-eicosatetraenoate + glutathione disulfide + H2O. It catalyses the reaction (12S)-hydroperoxy-(5Z,8Z,10E,14Z)-eicosatetraenoate + 2 glutathione = (12S)-hydroxy-(5Z,8Z,10E,14Z)-eicosatetraenoate + glutathione disulfide + H2O. The enzyme catalyses (12R)-hydroperoxy-(5Z,8Z,10E,14Z)-eicosatetraenoate + 2 glutathione = (12R)-hydroxy-(5Z,8Z,10E,14Z)-eicosatetraenoate + glutathione disulfide + H2O. It carries out the reaction (15S)-hydroperoxy-(5Z,8Z,11Z,13E)-eicosatetraenoate + 2 glutathione = (15S)-hydroxy-(5Z,8Z,11Z,13E)-eicosatetraenoate + glutathione disulfide + H2O. The catalysed reaction is (5S)-hydroperoxy-(6E,8Z,11Z,14Z,17Z)-eicosapentaenoate + 2 glutathione = (5S)-hydroxy-(6E,8Z,11Z,14Z,17Z)-eicosapentaenoate + glutathione disulfide + H2O. It catalyses the reaction (15S)-hydroperoxy-(5Z,8Z,11Z,13E,17Z)-eicosapentaenoate + 2 glutathione = (15S)-hydroxy-(5Z,8Z,11Z,13E,17Z)-eicosapentaenoate + glutathione disulfide + H2O. The enzyme catalyses (15S)-hydroperoxy-(11Z,13E)-eicosadienoate + 2 glutathione = (15S)-hydroxy-(11Z,13E)-eicosadienoate + glutathione disulfide + H2O. It carries out the reaction (17S)-hydroperoxy-(4Z,7Z,10Z,13Z,15E,19Z)-docosahexaenoate + 2 glutathione = (17S)-hydroxy-(4Z,7Z,10Z,13Z,15E,19Z)-docosahexaenoate + glutathione disulfide + H2O. Its function is as follows. Catalyzes the reduction of hydroperoxides in a glutathione-dependent manner thus regulating cellular redox homeostasis. Can reduce small soluble hydroperoxides such as H2O2, cumene hydroperoxide and tert-butyl hydroperoxide, as well as several fatty acid-derived hydroperoxides. In platelets catalyzes the reduction of 12-hydroperoxyeicosatetraenoic acid, the primary product of the arachidonate 12-lipoxygenase pathway. The sequence is that of Glutathione peroxidase 1 (GPX1) from Bos taurus (Bovine).